A 239-amino-acid polypeptide reads, in one-letter code: tRNA (guanine-N(1)-)-methyltransferase (239 aa).

S-adenosyl-L-methionine contacts are provided by residues Gly-108 and 127 to 132 (LGDFVL).

The protein belongs to the RNA methyltransferase TrmD family. In terms of assembly, homodimer.

It is found in the cytoplasm. The enzyme catalyses guanosine(37) in tRNA + S-adenosyl-L-methionine = N(1)-methylguanosine(37) in tRNA + S-adenosyl-L-homocysteine + H(+). Its function is as follows. Specifically methylates guanosine-37 in various tRNAs. The sequence is that of tRNA (guanine-N(1)-)-methyltransferase from Streptococcus thermophilus (strain CNRZ 1066).